The following is a 391-amino-acid chain: MQKLINSVQNYAWGSKTALTELYGMENPSSQPMAELWMGAHPKSSSRVQNAAGDIVSLRDVIESDKSTLLGEAVAKRFGELPFLFKVLCAAQPLSIQVHPNKHNSEIGFAKENAAGIPMDAAERNYKDPNHKPELVFALTPFLAMNAFREFSEIVSLLQPVAGAHPAIAHFLQQPHAERLSELFANLLNMQGEEKSRALAILKSALDSQQGEPWQTIRLISEFYPEDSGLFSPLLLNVVKLNPGEAMFLFAETPHAYLQGVALEVMANSDNVLRAGLTPKYIDIPELVANVKFEAKPANQLLTQPVKQGAELDFPIPVDDFAFSLHDLSDKETTISQQSAAILFCVEGDATLWKGSQQLQLKPGESAFIAANESPVTVKGHGRLARVYNKL.

The Zn(2+) site is built by Gln-97, His-99, Glu-134, and His-255. Arg-274 is an active-site residue. The residue at position 280 (Lys-280) is an N6-acetyllysine.

Belongs to the mannose-6-phosphate isomerase type 1 family. Zn(2+) serves as cofactor.

The protein localises to the cytoplasm. It catalyses the reaction D-mannose 6-phosphate = D-fructose 6-phosphate. Its function is as follows. Involved in the conversion of glucose to GDP-L-fucose, which can be converted to L-fucose, a capsular polysaccharide. The polypeptide is Mannose-6-phosphate isomerase (manA) (Shigella flexneri).